Consider the following 432-residue polypeptide: 3-phosphoshikimate 1-carboxyvinyltransferase (432 aa).

3-phosphoshikimate is bound by residues Lys23, Ser24, and Arg28. Lys23 lines the phosphoenolpyruvate pocket. Positions 95 and 123 each coordinate phosphoenolpyruvate. Ser167, Gln169, Asp317, and Lys344 together coordinate 3-phosphoshikimate. Gln169 is a phosphoenolpyruvate binding site. Asp317 functions as the Proton acceptor in the catalytic mechanism. Residues Arg348 and Arg390 each contribute to the phosphoenolpyruvate site.

Belongs to the EPSP synthase family. Monomer.

It localises to the cytoplasm. The catalysed reaction is 3-phosphoshikimate + phosphoenolpyruvate = 5-O-(1-carboxyvinyl)-3-phosphoshikimate + phosphate. It functions in the pathway metabolic intermediate biosynthesis; chorismate biosynthesis; chorismate from D-erythrose 4-phosphate and phosphoenolpyruvate: step 6/7. Functionally, catalyzes the transfer of the enolpyruvyl moiety of phosphoenolpyruvate (PEP) to the 5-hydroxyl of shikimate-3-phosphate (S3P) to produce enolpyruvyl shikimate-3-phosphate and inorganic phosphate. In Staphylococcus aureus (strain MRSA252), this protein is 3-phosphoshikimate 1-carboxyvinyltransferase.